Consider the following 328-residue polypeptide: 4-hydroxythreonine-4-phosphate dehydrogenase (328 aa).

Positions 134 and 135 each coordinate substrate. Residues His164, His209, and His265 each coordinate a divalent metal cation. Substrate contacts are provided by Lys273, Asn282, and Arg291.

This sequence belongs to the PdxA family. In terms of assembly, homodimer. Zn(2+) serves as cofactor. Mg(2+) is required as a cofactor. The cofactor is Co(2+).

The protein localises to the cytoplasm. It carries out the reaction 4-(phosphooxy)-L-threonine + NAD(+) = 3-amino-2-oxopropyl phosphate + CO2 + NADH. Its pathway is cofactor biosynthesis; pyridoxine 5'-phosphate biosynthesis; pyridoxine 5'-phosphate from D-erythrose 4-phosphate: step 4/5. In terms of biological role, catalyzes the NAD(P)-dependent oxidation of 4-(phosphooxy)-L-threonine (HTP) into 2-amino-3-oxo-4-(phosphooxy)butyric acid which spontaneously decarboxylates to form 3-amino-2-oxopropyl phosphate (AHAP). The polypeptide is 4-hydroxythreonine-4-phosphate dehydrogenase (Vibrio vulnificus (strain YJ016)).